A 340-amino-acid polypeptide reads, in one-letter code: NAC domain-containing protein 89 (340 aa).

Residues 21 to 164 (VFPGFKFSPT…AMVVCRVRRN (144 aa)) form the NAC domain. The DNA-binding element occupies 119–170 (IGTKRTLVFHIGRAPKGERTDWIMHEYCVKGVSLDDAMVVCRVRRNKEYNSG). Polar residues predominate over residues 167–181 (YNSGTSQKAPKPNSS). Residues 167–198 (YNSGTSQKAPKPNSSAEKHAKVQNGATSSGSP) form a disordered region.

As to quaternary structure, interacts with PAS1.

It localises to the cytoplasm. It is found in the nucleus. Transcription factor involved in plant cell division. This is NAC domain-containing protein 89 (NAC089) from Arabidopsis thaliana (Mouse-ear cress).